The primary structure comprises 513 residues: Carotenoid isomerooxygenase (513 aa).

Fe cation is bound by residues histidine 184, histidine 242, histidine 312, and histidine 503.

The protein belongs to the carotenoid oxygenase family. Requires Fe(2+) as cofactor.

The catalysed reaction is all-trans-zeaxanthin + O2 = (3R)-11-cis-3-hydroxyretinal + (3R)-all-trans-3-hydroxyretinal. It participates in cofactor metabolism; retinol metabolism. Catalyzes the oxidative cleavage at the 15,15'-double bond of carotenoids and the simultaneous all-trans to 11-cis isomerization of one cleavage product. Carotenoids like 11-cis retinal can promote visual pigment biogenesis in the dark. Essential for the biosynthesis of the 3-hydroxyretinal chromophore of rhodopsin from zeaxanthin and for proper photoreceptor development. The chain is Carotenoid isomerooxygenase (ninaB) from Galleria mellonella (Greater wax moth).